A 540-amino-acid chain; its full sequence is MPKIIAFDEEARRGLERGMNQLADAVKVTLGPKGRNVVLEKKWGVPTITNDGVSIAKEIELEDPYEKIGAELVKEVAKKTNDVAGDGTTTATILAQALVREGLRNVAAGANPLGLKKGIEVAVERVSEELSKQAKEVETKEQIASTASISAGDSAIGGLIAEALDKVGKEGVVTVEESNTFGLELELTEGMRFDKGYISPYFVTDADRQEAVLDDPYILIVNSKISAVKDLLPLLEKVMQTGKPLAIIAEDVEGEALATLVVNKIRGTFKSAAVKAPGFGDRRKAILGDIAILTGGQVISEDVGLKLESTSLDLLGRARKIVVTKDETTVVEGAGDPDQIAGRVSQIRNEIEKSDSDYDREKLQERLAKLAGGVAVIKVGAATEVELKEKKHRIEDAVSNAKAAVEEGIVAGGGVALLQASITAFEKLDLSGDEATGANIVRLALEAPIKQIAFNSGLEGGVVVEKVRNLPTGHGLNAATGEYVDLIGTGIIDPAKVTRSALQNAASIAGLFLTTEAVIADKPEKNPAPAVPGGGGDMDF.

Residues T29–P32, D86–T90, G413, N477–A479, and D493 contribute to the ATP site.

Belongs to the chaperonin (HSP60) family. Forms a cylinder of 14 subunits composed of two heptameric rings stacked back-to-back. Interacts with the co-chaperonin GroES.

It localises to the cytoplasm. The catalysed reaction is ATP + H2O + a folded polypeptide = ADP + phosphate + an unfolded polypeptide.. Together with its co-chaperonin GroES, plays an essential role in assisting protein folding. The GroEL-GroES system forms a nano-cage that allows encapsulation of the non-native substrate proteins and provides a physical environment optimized to promote and accelerate protein folding. The polypeptide is Chaperonin GroEL 4 (Frankia casuarinae (strain DSM 45818 / CECT 9043 / HFP020203 / CcI3)).